We begin with the raw amino-acid sequence, 215 residues long: Charged multivesicular body protein 5 (215 aa).

The stretch at 29–81 (QMDEKINGLNQELLAYDKQIKATRPGPAQNAIKQKAIRVLQQKKMYERQRDQM) forms a coiled coil. A disordered region spans residues 186-215 (TPSVPTTDPHQSSVDEYGLPIGQEASQQVV). Over residues 188–199 (SVPTTDPHQSSV) the composition is skewed to polar residues.

Belongs to the SNF7 family. Probable peripherally associated component of the endosomal sorting required for transport complex III (ESCRT-III).

Its subcellular location is the endosome membrane. Functionally, probable peripherally associated component of the endosomal sorting required for transport complex III (ESCRT-III) which is involved in multivesicular bodies (MVBs) formation and sorting of endosomal cargo proteins into MVBs. MVBs contain intraluminal vesicles (ILVs) that are generated by invagination and scission from the limiting membrane of the endosome and are delivered to lysosomes enabling degradation of membrane proteins. The protein is Charged multivesicular body protein 5 (chmp5) of Dictyostelium discoideum (Social amoeba).